Reading from the N-terminus, the 249-residue chain is Proteasome subunit alpha type-3 (249 aa).

This sequence belongs to the peptidase T1A family. As to quaternary structure, the 26S proteasome consists of a 20S proteasome core and two 19S regulatory subunits. The 20S proteasome core is composed of 28 subunits that are arranged in four stacked rings, resulting in a barrel-shaped structure. The two end rings are each formed by seven alpha subunits, and the two central rings are each formed by seven beta subunits. The catalytic chamber with the active sites is on the inside of the barrel.

It is found in the cytoplasm. It localises to the nucleus. The proteasome is a multicatalytic proteinase complex which is characterized by its ability to cleave peptides with Arg, Phe, Tyr, Leu, and Glu adjacent to the leaving group at neutral or slightly basic pH. The proteasome has an ATP-dependent proteolytic activity. This is Proteasome subunit alpha type-3 (PAG1) from Oryza sativa subsp. japonica (Rice).